The sequence spans 155 residues: UPF0178 protein RHE_CH02229 (155 aa).

Belongs to the UPF0178 family.

This chain is UPF0178 protein RHE_CH02229, found in Rhizobium etli (strain ATCC 51251 / DSM 11541 / JCM 21823 / NBRC 15573 / CFN 42).